Reading from the N-terminus, the 246-residue chain is Uridylate kinase (246 aa).

18 to 21 contributes to the ATP binding site; that stretch reads KVSG. G60 provides a ligand contact to UMP. Residues G61 and R65 each contribute to the ATP site. UMP is bound by residues D80 and 141-148; that span reads TGNPFFTT. The ATP site is built by T168, Q169, Y174, and D177.

It belongs to the UMP kinase family. As to quaternary structure, homohexamer.

The protein localises to the cytoplasm. It carries out the reaction UMP + ATP = UDP + ADP. The protein operates within pyrimidine metabolism; CTP biosynthesis via de novo pathway; UDP from UMP (UMPK route): step 1/1. Its activity is regulated as follows. Inhibited by UTP. Functionally, catalyzes the reversible phosphorylation of UMP to UDP. The chain is Uridylate kinase from Granulibacter bethesdensis (strain ATCC BAA-1260 / CGDNIH1).